Consider the following 552-residue polypeptide: Leucine-rich repeat-containing protein 56 (552 aa).

LRR repeat units follow at residues 94 to 115 (NLIQLKLNHSYLGSLRDLGTSL), 117 to 138 (HLQVLWLARCGLTDLDGIGSFL), 139 to 160 (ELKELYVSYNNISDLSPLCLLE), 161 to 182 (QLEVLDLEGNNVEDLGQMRYLQ), and 186 to 206 (RLAMLTLEGNLVCLKPDPGPS). Disordered stretches follow at residues 348–375 (APLEQMPPHRPDLAIRPSTPRPDPAESC) and 401–435 (QQERSAQVQAQDPQKDPVEQEDQTGPKTSLTPPRL).

This sequence belongs to the LRRC56 family. Interacts with IFT88.

The protein localises to the cell projection. The protein resides in the cilium. Its function is as follows. Required for the assembly of dynein arms. The polypeptide is Leucine-rich repeat-containing protein 56 (Lrrc56) (Mus musculus (Mouse)).